The sequence spans 156 residues: Transcription antitermination protein NusB (156 aa).

The protein belongs to the NusB family.

Functionally, involved in transcription antitermination. Required for transcription of ribosomal RNA (rRNA) genes. Binds specifically to the boxA antiterminator sequence of the ribosomal RNA (rrn) operons. The polypeptide is Transcription antitermination protein NusB (Syntrophotalea carbinolica (strain DSM 2380 / NBRC 103641 / GraBd1) (Pelobacter carbinolicus)).